Reading from the N-terminus, the 261-residue chain is Cytochrome c oxidase subunit 3 (261 aa).

The Mitochondrial matrix portion of the chain corresponds to 1-15 (MTHQTHAYHMVNPSP). Residues 16 to 34 (WPLTGALSALLMTSGLTMW) traverse the membrane as a helical segment. Over 35 to 40 (FHFNSM) the chain is Mitochondrial intermembrane. A helical membrane pass occupies residues 41-66 (LLLSLGLLTNTLTMYQWWRDIIREST). At 67–72 (FQGHHT) the chain is on the mitochondrial matrix side. A helical membrane pass occupies residues 73 to 105 (SVVQKGLRYGMILFIISEVLFFTGFFWAFYHSS). Residues 106-128 (LAPTPELGGCWPPTGIHPLNPLE) lie on the Mitochondrial intermembrane side of the membrane. A helical transmembrane segment spans residues 129–152 (VPLLNTSILLASGVSITWAHHSLM). At 153–155 (EGD) the chain is on the mitochondrial matrix side. Residues 156–183 (RKHMIQALSITIALGVYFTLLQASEYYE) traverse the membrane as a helical segment. Residues 184–190 (APFTISD) are Mitochondrial intermembrane-facing. A helical transmembrane segment spans residues 191 to 223 (GVYGSTFFVATGFHGLHVIIGSTFLAVCLLRQL). Residues 224–232 (KFHFTSNHH) are Mitochondrial matrix-facing. The chain crosses the membrane as a helical span at residues 233–256 (FGFEAAAWYWHFVDVVWLFLYVSI). At 257 to 261 (YWWGS) the chain is on the mitochondrial intermembrane side.

The protein belongs to the cytochrome c oxidase subunit 3 family. As to quaternary structure, component of the cytochrome c oxidase (complex IV, CIV), a multisubunit enzyme composed of 14 subunits. The complex is composed of a catalytic core of 3 subunits MT-CO1, MT-CO2 and MT-CO3, encoded in the mitochondrial DNA, and 11 supernumerary subunits COX4I, COX5A, COX5B, COX6A, COX6B, COX6C, COX7A, COX7B, COX7C, COX8 and NDUFA4, which are encoded in the nuclear genome. The complex exists as a monomer or a dimer and forms supercomplexes (SCs) in the inner mitochondrial membrane with NADH-ubiquinone oxidoreductase (complex I, CI) and ubiquinol-cytochrome c oxidoreductase (cytochrome b-c1 complex, complex III, CIII), resulting in different assemblies (supercomplex SCI(1)III(2)IV(1) and megacomplex MCI(2)III(2)IV(2)).

The protein localises to the mitochondrion inner membrane. The enzyme catalyses 4 Fe(II)-[cytochrome c] + O2 + 8 H(+)(in) = 4 Fe(III)-[cytochrome c] + 2 H2O + 4 H(+)(out). In terms of biological role, component of the cytochrome c oxidase, the last enzyme in the mitochondrial electron transport chain which drives oxidative phosphorylation. The respiratory chain contains 3 multisubunit complexes succinate dehydrogenase (complex II, CII), ubiquinol-cytochrome c oxidoreductase (cytochrome b-c1 complex, complex III, CIII) and cytochrome c oxidase (complex IV, CIV), that cooperate to transfer electrons derived from NADH and succinate to molecular oxygen, creating an electrochemical gradient over the inner membrane that drives transmembrane transport and the ATP synthase. Cytochrome c oxidase is the component of the respiratory chain that catalyzes the reduction of oxygen to water. Electrons originating from reduced cytochrome c in the intermembrane space (IMS) are transferred via the dinuclear copper A center (CU(A)) of subunit 2 and heme A of subunit 1 to the active site in subunit 1, a binuclear center (BNC) formed by heme A3 and copper B (CU(B)). The BNC reduces molecular oxygen to 2 water molecules using 4 electrons from cytochrome c in the IMS and 4 protons from the mitochondrial matrix. The polypeptide is Cytochrome c oxidase subunit 3 (MT-CO3) (Sus scrofa (Pig)).